The sequence spans 731 residues: Beta-galactosidase (731 aa).

The N-terminal stretch at 1–23 (MGVGIQTMWSILLLFSCIFSAAS) is a signal peptide. Glutamate 182 (proton donor) is an active-site residue. Catalysis depends on glutamate 251, which acts as the Nucleophile. An N-linked (GlcNAc...) asparagine glycan is attached at asparagine 459.

This sequence belongs to the glycosyl hydrolase 35 family.

Its subcellular location is the secreted. It is found in the extracellular space. The protein resides in the apoplast. It carries out the reaction Hydrolysis of terminal non-reducing beta-D-galactose residues in beta-D-galactosides.. Its function is as follows. Involved in cell wall degradation. Degrades polysaccharides containing beta-(1--&gt;4)-linked galactans, acting as an exo-(1--&gt;4)-beta-D-galactanase. The protein is Beta-galactosidase of Malus domestica (Apple).